The sequence spans 203 residues: NAD(P)H dehydrogenase (quinone) (203 aa).

In terms of domain architecture, Flavodoxin-like spans 3–194 (VLIVYYSMYG…AGARFQGRYV (192 aa)). Residues 9–14 (SMYGHI) and 82–84 (TRF) each bind FMN. Y11 contributes to the NAD(+) binding site. Residue W102 participates in substrate binding. Residues 117–123 (SSATQHG) and H138 each bind FMN.

This sequence belongs to the WrbA family. It depends on FMN as a cofactor.

The catalysed reaction is a quinone + NADH + H(+) = a quinol + NAD(+). It carries out the reaction a quinone + NADPH + H(+) = a quinol + NADP(+). This chain is NAD(P)H dehydrogenase (quinone), found in Geobacter sulfurreducens (strain ATCC 51573 / DSM 12127 / PCA).